The chain runs to 259 residues: Proteasome subunit alpha (259 aa).

It belongs to the peptidase T1A family. The 20S proteasome core is composed of 14 alpha and 14 beta subunits that assemble into four stacked heptameric rings, resulting in a barrel-shaped structure. The two inner rings, each composed of seven catalytic beta subunits, are sandwiched by two outer rings, each composed of seven alpha subunits. The catalytic chamber with the active sites is on the inside of the barrel. Has a gated structure, the ends of the cylinder being occluded by the N-termini of the alpha-subunits. Is capped at one or both ends by the proteasome regulatory ATPase, PAN.

The protein resides in the cytoplasm. The formation of the proteasomal ATPase PAN-20S proteasome complex, via the docking of the C-termini of PAN into the intersubunit pockets in the alpha-rings, triggers opening of the gate for substrate entry. Interconversion between the open-gate and close-gate conformations leads to a dynamic regulation of the 20S proteasome proteolysis activity. Its function is as follows. Component of the proteasome core, a large protease complex with broad specificity involved in protein degradation. The sequence is that of Proteasome subunit alpha from Methanococcus maripaludis (strain DSM 14266 / JCM 13030 / NBRC 101832 / S2 / LL).